Consider the following 451-residue polypeptide: Phosphoglucosamine mutase (451 aa).

Serine 107 functions as the Phosphoserine intermediate in the catalytic mechanism. The Mg(2+) site is built by serine 107, aspartate 246, aspartate 248, and aspartate 250. Position 107 is a phosphoserine (serine 107).

It belongs to the phosphohexose mutase family. Requires Mg(2+) as cofactor. Post-translationally, activated by phosphorylation.

The catalysed reaction is alpha-D-glucosamine 1-phosphate = D-glucosamine 6-phosphate. Catalyzes the conversion of glucosamine-6-phosphate to glucosamine-1-phosphate. This chain is Phosphoglucosamine mutase, found in Azoarcus sp. (strain BH72).